Here is a 445-residue protein sequence, read N- to C-terminus: UDP-N-acetylmuramoylalanine--D-glutamate ligase (445 aa).

Residue 126-132 (GTSGKTT) coordinates ATP.

The protein belongs to the MurCDEF family.

The protein localises to the cytoplasm. The catalysed reaction is UDP-N-acetyl-alpha-D-muramoyl-L-alanine + D-glutamate + ATP = UDP-N-acetyl-alpha-D-muramoyl-L-alanyl-D-glutamate + ADP + phosphate + H(+). It functions in the pathway cell wall biogenesis; peptidoglycan biosynthesis. In terms of biological role, cell wall formation. Catalyzes the addition of glutamate to the nucleotide precursor UDP-N-acetylmuramoyl-L-alanine (UMA). This Nitratidesulfovibrio vulgaris (strain DSM 19637 / Miyazaki F) (Desulfovibrio vulgaris) protein is UDP-N-acetylmuramoylalanine--D-glutamate ligase.